Reading from the N-terminus, the 54-residue chain is Large ribosomal subunit protein bL32c (54 aa).

It belongs to the bacterial ribosomal protein bL32 family.

The protein localises to the plastid. Its subcellular location is the chloroplast. The sequence is that of Large ribosomal subunit protein bL32c from Lactuca sativa (Garden lettuce).